A 99-amino-acid chain; its full sequence is Single insulin-like growth factor-binding domain protein-2 (99 aa).

Residues 1 to 18 (MESLFIFAFGMMLSSASA) form the signal peptide. The IGFBP N-terminal domain maps to 19-98 (LSCIPCVPEE…GQEVGRCRKK (80 aa)). The O-linked (GalNAc...) serine glycan is linked to Ser-20. 6 cysteine pairs are disulfide-bonded: Cys-21-Cys-44, Cys-24-Cys-46, Cys-29-Cys-47, Cys-35-Cys-50, Cys-58-Cys-74, and Cys-68-Cys-95.

As to expression, expressed in hemocytes.

The protein resides in the secreted. In terms of biological role, has a role in the innate immune system. The polypeptide is Single insulin-like growth factor-binding domain protein-2 (Cupiennius salei (American wandering spider)).